The chain runs to 244 residues: Phosphoadenosine 5'-phosphosulfate reductase (244 aa).

Catalysis depends on cysteine 239, which acts as the Nucleophile; cysteine thiosulfonate intermediate.

It belongs to the PAPS reductase family. CysH subfamily.

The protein resides in the cytoplasm. It catalyses the reaction [thioredoxin]-disulfide + sulfite + adenosine 3',5'-bisphosphate + 2 H(+) = [thioredoxin]-dithiol + 3'-phosphoadenylyl sulfate. It participates in sulfur metabolism; hydrogen sulfide biosynthesis; sulfite from sulfate: step 3/3. Functionally, catalyzes the formation of sulfite from phosphoadenosine 5'-phosphosulfate (PAPS) using thioredoxin as an electron donor. In Salmonella paratyphi A (strain AKU_12601), this protein is Phosphoadenosine 5'-phosphosulfate reductase.